We begin with the raw amino-acid sequence, 206 residues long: UPF0301 protein Msil_1255 (206 aa).

This sequence belongs to the UPF0301 (AlgH) family.

The sequence is that of UPF0301 protein Msil_1255 from Methylocella silvestris (strain DSM 15510 / CIP 108128 / LMG 27833 / NCIMB 13906 / BL2).